Reading from the N-terminus, the 520-residue chain is Mitogen-activated protein kinase kinase 3 (520 aa).

Ser69 bears the Phosphoserine mark. Residues 83–339 (MRVFGAIGSG…ADQLLSHPFI (257 aa)) enclose the Protein kinase domain. ATP is bound by residues 89 to 97 (IGSGASSVV) and Lys112. Catalysis depends on Asp207, which acts as the Proton acceptor. Residue Ser235 is modified to Phosphoserine. Phosphothreonine occurs at positions 241 and 245. The NTF2 domain maps to 366–516 (LADMLTIHYY…YFLAKQELYI (151 aa)).

It belongs to the protein kinase superfamily. STE Ser/Thr protein kinase family. MAP kinase kinase subfamily. In terms of assembly, interacts with MPK1, MPK2 and MPK7. Interacts with P.syringae type III effector HopF2. Interacts with MPK14. Binds to MAPKKK17 and MAPKKK18. Binds to MAPKKK20. Phosphorylation at Ser-235 and Thr-241 by MAP kinase kinase kinases positively regulates kinase activity. Phosphorylated by MAPKKK20. As to expression, mostly expressed in leaves, and, to a lower extent, in roots, seedlings, flower buds, flowers and siliques.

It localises to the nucleus. Its subcellular location is the cytoplasm. It carries out the reaction L-seryl-[protein] + ATP = O-phospho-L-seryl-[protein] + ADP + H(+). The enzyme catalyses L-threonyl-[protein] + ATP = O-phospho-L-threonyl-[protein] + ADP + H(+). The catalysed reaction is L-tyrosyl-[protein] + ATP = O-phospho-L-tyrosyl-[protein] + ADP + H(+). MKK3-MPK6 module plays an important role in the jasmonate signal transduction pathway through the negative regulation of MYC2/JIN1 expression. Activates by phosphorylation the downstream MPK6, MPK7 and MPK8. MKK3-MPK7 module acts as a positive regulator of PR1 gene expression. MKK3-MPK8 module negatively regulates ROS accumulation through controlling expression of the RBOHD gene. Component of the abscisic acid (ABA) signaling pathway that may act as ABA signal transducer in the context of abiotic stresses. Activator of the C group MAP kinases. Activates MPK7 in response to ABA. Mitogen-activated protein kinase (MAPK) that is specifically regulated by MAPKKK20 and mediates signaling that regulates cortical microtubule functions. In Arabidopsis thaliana (Mouse-ear cress), this protein is Mitogen-activated protein kinase kinase 3.